A 1507-amino-acid polypeptide reads, in one-letter code: Nonribosomal peptide synthetase ataP (1507 aa).

The Carrier 1 domain occupies 1-72; the sequence is MQINIRNEIA…DIISRSTGMY (72 aa). Position 33 is an O-(pantetheine 4'-phosphoryl)serine (Ser-33). Residues 98–119 form a disordered region; it reads TPSPSPSGPSTGCPTPDTLDTT. Over residues 105–115 the composition is skewed to low complexity; sequence GPSTGCPTPDT. Residues 163–429 form a condensation 1 region; sequence TRMAWQQVLE…NRVFRQLVQL (267 aa). Residues 514–893 are adenylation; sequence AAAENPEACA…GRNDRQIKLR (380 aa). The Carrier 2 domain maps to 988-1065; that stretch reads NEMSPTEQRV…DLSQRIDKLQ (78 aa). An O-(pantetheine 4'-phosphoryl)serine modification is found at Ser-1025. Positions 1099-1471 are condensation 2; sequence TSNTSFTVSF…MTALRLLIKN (373 aa).

This sequence belongs to the NRP synthetase family.

It participates in mycotoxin biosynthesis. Functionally, nonribosomal peptide synthetase; part of the gene cluster that mediates the biosynthesis of acetylaranotin, a member of the epipolythiodioxopiperazine (ETP) class of toxins characterized by a disulfide-bridged cyclic dipeptide. The first step of acetylaranotin biosynthesis is performed by the NRPS ataP which produces diketopiperazine cyclo-L-Phe-L-Phe via the condensation of 2 phenylalanines (L-Phe). The ataC domain of ataTC then catalyzes the formation of bishydroxylation of cyclo-L-Phe-L-Phe. The glutathione S-transferase domain ataG in ataIMG further catalyzes the conjugation of two glutathiones to the bishydroxylated intermediate. Next, the dipeptidase ataJ removes the Glu residues. The following step is performed by the carbon sulfur lyase domain ataI of ataIMG which may convert the bis-cysteinyl adduct to yield an epidithiol intermediate. The ataT domain from ataTC then catalyzes the oxidation of the free dithiols, followed by a cyclization step catalyzed by the cytochrome P450 ataF. AtaF probably acts as an epoxidase to promote a dual epoxidation formation at C8 and C9 along with C8' and C9', followed by the spontaneous nucleophilic attack of the amide nitrogens N10 and N10' to yield an intermediate with the pyrrolidine partial structure. The final steps of acetylaranotin biosynthesis involve the acetylation and ring rearrangement of an epitetrathiodiketopiperazine intermediate to produce acetylaranotin. AtaH probably catalyzes the acetylation of epitetrathiodiketopiperazine to produce a diacetate and ataY is responsible for the formation of the dihydrooxepin moiety that converts the diacetate intermediate to acetylaranotin via acetylapoaranotin. Both enzymes could function independently in the absence of the other. The acetylaranotin bis-thiomethyltransferase ataS located outside of acetylaranotin gene cluster is the main thiomethyltransferase responsible for converting acetylaranotin and its related intermediates to their methylated forms. The protein is Nonribosomal peptide synthetase ataP of Aspergillus terreus (strain NIH 2624 / FGSC A1156).